The sequence spans 561 residues: Potassium-transporting ATPase potassium-binding subunit (561 aa).

The next 10 membrane-spanning stretches (helical) occupy residues 4–24, 65–85, 133–153, 177–197, 253–273, 285–305, 380–400, 417–437, 484–504, and 528–548; these read IVMQ…PLGI, AVSV…VLML, IGLT…LFAV, LYIL…QGVV, FTNL…VVMF, AIMT…TISE, GLYG…LLVG, MVCL…AVAV, MVGA…ALYL, and FIGL…LPAL.

The protein belongs to the KdpA family. The system is composed of three essential subunits: KdpA, KdpB and KdpC.

Its subcellular location is the cell membrane. In terms of biological role, part of the high-affinity ATP-driven potassium transport (or Kdp) system, which catalyzes the hydrolysis of ATP coupled with the electrogenic transport of potassium into the cytoplasm. This subunit binds the extracellular potassium ions and delivers the ions to the membrane domain of KdpB through an intramembrane tunnel. The protein is Potassium-transporting ATPase potassium-binding subunit of Listeria monocytogenes serotype 4b (strain CLIP80459).